A 372-amino-acid polypeptide reads, in one-letter code: Alanine racemase (372 aa).

Lys-33 (proton acceptor; specific for D-alanine) is an active-site residue. The residue at position 33 (Lys-33) is an N6-(pyridoxal phosphate)lysine. Arg-131 contributes to the substrate binding site. The Proton acceptor; specific for L-alanine role is filled by Tyr-261. Met-309 is a substrate binding site.

Belongs to the alanine racemase family. The cofactor is pyridoxal 5'-phosphate.

It catalyses the reaction L-alanine = D-alanine. Its pathway is amino-acid biosynthesis; D-alanine biosynthesis; D-alanine from L-alanine: step 1/1. Functionally, catalyzes the interconversion of L-alanine and D-alanine. May also act on other amino acids. In Salinispora arenicola (strain CNS-205), this protein is Alanine racemase (alr).